Consider the following 407-residue polypeptide: Serine/threonine transporter SstT (407 aa).

9 consecutive transmembrane segments (helical) span residues 10–30, 42–62, 81–101, 141–161, 179–199, 218–238, 245–267, 288–308, and 316–336; these read AKGNLIIQICAGIALGILIGI, LGILFTSALKAIAPMLVFILI, IIILYIVGTFLASACAILANF, ALSSGNYLGILTWAIAGGAAL, VLKIVKFVVKLAPFGIFGLVA, ILLVATMLFVTFVINALIVFF, FPLIFICLRHSAFFAFFTRSSAA, ISIPLGATINMAGAAVTIAIL, and VGIEISLLQAFLLSIIATFAA.

Belongs to the dicarboxylate/amino acid:cation symporter (DAACS) (TC 2.A.23) family.

Its subcellular location is the cell inner membrane. It catalyses the reaction L-serine(in) + Na(+)(in) = L-serine(out) + Na(+)(out). It carries out the reaction L-threonine(in) + Na(+)(in) = L-threonine(out) + Na(+)(out). Its function is as follows. Involved in the import of serine and threonine into the cell, with the concomitant import of sodium (symport system). In Campylobacter jejuni subsp. doylei (strain ATCC BAA-1458 / RM4099 / 269.97), this protein is Serine/threonine transporter SstT.